A 328-amino-acid chain; its full sequence is UPF0421 protein SERP1427 (328 aa).

Helical transmembrane passes span 26-46 (LFCMLLNLTPIFAILTAIVTI), 61-81 (LPATVIGALFAVVFTYVFGDQ), 109-129 (AVLTSVAMIPGIHEAYVFNFF), and 132-152 (LLTALIGLVTAGLVNFIILPP).

Belongs to the UPF0421 family.

The protein localises to the cell membrane. The sequence is that of UPF0421 protein SERP1427 from Staphylococcus epidermidis (strain ATCC 35984 / DSM 28319 / BCRC 17069 / CCUG 31568 / BM 3577 / RP62A).